A 963-amino-acid polypeptide reads, in one-letter code: Translation initiation factor IF-2 (963 aa).

Basic and acidic residues predominate over residues 53 to 77 (SHGQADDSARKKITLTKRETSEIRQ). Positions 53–377 (SHGQADDSAR…RSNFQAPTEP (325 aa)) are disordered. Residues 78–87 (SDATGKTRTV) are compositionally biased toward polar residues. Basic and acidic residues-rich tracts occupy residues 98 to 110 (IKRD…HQAD), 123 to 183 (EEAR…KAEE), 197 to 250 (DTSR…EAEA), and 267 to 278 (PSERKAEEKKAE). Residues 343 to 356 (SSGGVGGWRGGPRG) show a composition bias toward gly residues. A tr-type G domain is found at 463-632 (PRPPVVTVMG…SLQAEVLELK (170 aa)). A G1 region spans residues 472–479 (GHVDHGKT). 472–479 (GHVDHGKT) provides a ligand contact to GTP. Residues 497 to 501 (GITQH) form a G2 region. The interval 518–521 (DTPG) is G3. Residues 518–522 (DTPGH) and 572–575 (NKVD) each bind GTP. The interval 572 to 575 (NKVD) is G4. The tract at residues 608 to 610 (SAK) is G5.

The protein belongs to the TRAFAC class translation factor GTPase superfamily. Classic translation factor GTPase family. IF-2 subfamily.

The protein resides in the cytoplasm. In terms of biological role, one of the essential components for the initiation of protein synthesis. Protects formylmethionyl-tRNA from spontaneous hydrolysis and promotes its binding to the 30S ribosomal subunits. Also involved in the hydrolysis of GTP during the formation of the 70S ribosomal complex. This is Translation initiation factor IF-2 from Cupriavidus taiwanensis (strain DSM 17343 / BCRC 17206 / CCUG 44338 / CIP 107171 / LMG 19424 / R1) (Ralstonia taiwanensis (strain LMG 19424)).